A 249-amino-acid chain; its full sequence is Octanoyltransferase (249 aa).

A disordered region spans residues 1–23 (MVNSPQNPRQDQRQDLDLTSFSA). The region spanning 57–241 (GEAPELVWLL…AFEELFGPTR (185 aa)) is the BPL/LPL catalytic domain. Substrate contacts are provided by residues 95–102 (RGGQLTYH), 170–172 (AIG), and 183–185 (GIA). Cysteine 201 (acyl-thioester intermediate) is an active-site residue.

It belongs to the LipB family.

It localises to the cytoplasm. The enzyme catalyses octanoyl-[ACP] + L-lysyl-[protein] = N(6)-octanoyl-L-lysyl-[protein] + holo-[ACP] + H(+). Its pathway is protein modification; protein lipoylation via endogenous pathway; protein N(6)-(lipoyl)lysine from octanoyl-[acyl-carrier-protein]: step 1/2. Catalyzes the transfer of endogenously produced octanoic acid from octanoyl-acyl-carrier-protein onto the lipoyl domains of lipoate-dependent enzymes. Lipoyl-ACP can also act as a substrate although octanoyl-ACP is likely to be the physiological substrate. The chain is Octanoyltransferase from Bradyrhizobium diazoefficiens (strain JCM 10833 / BCRC 13528 / IAM 13628 / NBRC 14792 / USDA 110).